The chain runs to 655 residues: p-hydroxybenzoic acid efflux pump subunit AaeB (655 aa).

At 1 to 12 (MDIFSIANQHIR) the chain is on the periplasmic side. Residues 13 to 33 (FAVKLATAIVLALFVGFHFQL) form a helical membrane-spanning segment. Residues 34 to 37 (ETPR) are Cytoplasmic-facing. The chain crosses the membrane as a helical span at residues 38–58 (WAVLTAAIVAAGPAFAAGGEP). At 59 to 68 (YSGAIRYRGF) the chain is on the periplasmic side. A helical membrane pass occupies residues 69–89 (LRIIGTFIGCIAGLVIIIAMI). Residues 90–92 (RAP) lie on the Cytoplasmic side of the membrane. A helical membrane pass occupies residues 93–113 (LLMILVCCIWAGFCTWISSLV). The Periplasmic portion of the chain corresponds to 114–120 (RIENSYA). A helical membrane pass occupies residues 121-141 (WGLAGYTALIIVITIQPEPLL). Topologically, residues 142-151 (TPQFAVERCS) are cytoplasmic. Residues 152–172 (EIVIGIVCAIMADLLFSPRSI) traverse the membrane as a helical segment. Residues 173 to 369 (KQEVDRELES…RTTLSCILGT (197 aa)) lie on the Periplasmic side of the membrane. A helical transmembrane segment spans residues 370 to 390 (LFWLWTGWTSGSGAMVMIAVV). The Cytoplasmic portion of the chain corresponds to 391–406 (TSLAMRLPNPRMVAID). A helical membrane pass occupies residues 407 to 427 (FIYGTLAALPLGLLYFLVIIP). The Periplasmic portion of the chain corresponds to 428-430 (NTQ). A helical transmembrane segment spans residues 431–451 (QSMLLLCISLAVLGFFLGIEV). Topologically, residues 452-458 (QKRRLGS) are cytoplasmic. A helical membrane pass occupies residues 459 to 479 (MGALASTINIIVLDNPMTFHF). The Periplasmic segment spans residues 480–481 (SQ). A helical membrane pass occupies residues 482–502 (FLDSALGQIVGCVLAFTVILL). The Cytoplasmic segment spans residues 503 to 655 (VRDKSRDRTG…HKYQHALTDS (153 aa)).

This sequence belongs to the aromatic acid exporter ArAE (TC 2.A.85) family.

The protein localises to the cell inner membrane. Its function is as follows. Forms an efflux pump with AaeA. Could function as a metabolic relief valve, allowing to eliminate certain compounds when they accumulate to high levels in the cell. This is p-hydroxybenzoic acid efflux pump subunit AaeB from Escherichia coli O157:H7.